A 596-amino-acid chain; its full sequence is Pentatricopeptide repeat-containing protein At5g38730 (596 aa).

PPR repeat units follow at residues 132–166 (VSHVFSWLMIYYAKAGMINDSIVVFEQIRSCGLKP), 167–201 (HLQACTVLLNSLVKQRLTDTVWKIFKKMVKLGVVA), 202–236 (NIHVYNVLVHACSKSGDPEKAEKLLSEMEEKGVFP), 237–271 (DIFTYNTLISVYCKKSMHFEALSVQDRMERSGVAP), 272–302 (NIVTYNSFIHGFSREGRMREATRLFREIKDD), 306–340 (NHVTYTTLIDGYCRMNDIDEALRLREVMESRGFSP), 341–375 (GVVTYNSILRKLCEDGRIREANRLLTEMSGKKIEP), 376–410 (DNITCNTLINAYCKIEDMVSAVKVKKKMIESGLKL), 411–445 (DMYSYKALIHGFCKVLELENAKEELFSMIEKGFSP), 446–480 (GYATYSWLVDGFYNQNKQDEITKLLEEFEKRGLCA), 481–515 (DVALYRGLIRRICKLEQVDYAKVLFESMEKKGLVG), and 516–550 (DSVIFTTMAYAYWRTGKVTEASALFDVMYNRRLMV).

Belongs to the PPR family. P subfamily.

This is Pentatricopeptide repeat-containing protein At5g38730 from Arabidopsis thaliana (Mouse-ear cress).